Reading from the N-terminus, the 989-residue chain is MAPPMTLEQWLLWKKMSQAHQALENVTTLTEEQKQQVIIDIQHEDVVPTRMDKLKYLAYSCCATSTRVLCWIVLVCVLLLVVFISCFVTMSRIQWNKDIAVFGPVIDWNVSQQAVIQQIRAKRLARSIRVEHATETYVEVNMTSIPQGVLYVPHPEPIILKERILGLSQVMMINSENIANTANLTQETKVLLADMINEEMNDLANQMIDFEIPLGDPRDQKQYQHQKCFQEFAHCYLVKYKTTKGWPSSTVIADQCPLPGNHPTVQYAHQNIWDYYVPFEQIRPEGWNSKSYYEDARIGGFYIPKWLRNNSYTHVLFCSDQIYGKWYNIDLTAQERENLLVRKLINLAKGNSSQLKDRAMPAEWDKQGKADLFRQINTLDVCNRPEMVFLLNSSYYEFSLWEGDCGFTRQNVTQANSLCKDFYNNSKWQKLHPYSCRFWRYKQEKEETKCSNGEKKKCLYYPQWDTPEALYDFGFLAYLNSFPSPICIKNQTIREPEYKISSLYLECMNASDRHGIDSALLALKTFLNFTGQSVNEMPLARAFVGLTDPKFPPTYPNITRESSGCNNNKRKRRSVNNYERLRSMGYALTGAVQTLSQISDINDERLQHGVYLLRDHVVTLMEAALHDVSIMEGMLAIQHVHTHLNHLKTMLLMRKIDWTFIRSDWIQQQLQKTDDEMKLIRRTARSLVYYVTQTSSSPTATSWEIGIYYEIVIPKHIYLNNWQVINVGHLLESAGHLTHVKVKHPYEIINKECSDTQYLHLEECIREDYVICDIVQIVQPCGNATELSDCPVTALKVKTPYIQVSPLKNGSYLVLSSTKDCSIPAYVPSVVTVNETVKCFGVEFHKPLYAETKTSYEPQVPHLKLRLPHLTGIIASLQSLEIEVTSTQENIKDQIERAKAQLLRLDIHEGDFPDWLKQVASATRDVWPAAASFIQGVGNFLSNTAQGIFGSAVSLLFYAKPILIGIGVILLIALLFKIISWLPGKPKKN.

The interval 1 to 15 is involved in virion budding; it reads MAPPMTLEQWLLWKK. Residues 1–65 lie on the Cytoplasmic side of the membrane; that stretch reads MAPPMTLEQW…YLAYSCCATS (65 aa). Glycyl lysine isopeptide (Lys-Gly) (interchain with G-Cter in ubiquitin) cross-links involve residues Lys-14, Lys-15, Lys-34, and Lys-53. Residues 66-88 form a helical; Signal-anchor for type III membrane protein membrane-spanning segment; it reads TRVLCWIVLVCVLLLVVFISCFV. The Lumenal segment spans residues 89-961; it reads TMSRIQWNKD…AVSLLFYAKP (873 aa). 12 N-linked (GlcNAc...) asparagine; by host glycosylation sites follow: Asn-109, Asn-141, Asn-183, Asn-309, Asn-351, Asn-392, Asn-411, Asn-424, Asn-490, Asn-509, Asn-528, and Asn-557. Residues 577–599 are fusion peptide; that stretch reads NYERLRSMGYALTGAVQTLSQIS. N-linked (GlcNAc...) asparagine; by host glycosylation is found at Asn-783, Asn-809, and Asn-834. A helical membrane pass occupies residues 962–982; that stretch reads ILIGIGVILLIALLFKIISWL. Topologically, residues 983-989 are cytoplasmic; that stretch reads PGKPKKN. Residues 985–987 carry the Endoplasmic reticulum retention signal motif; sequence KPK.

The mature envelope protein consists of a trimer of SU-TM heterodimers. The N-terminus of leader peptide specifically interacts with Gag protein. This specific interaction between Gag protein and Env glycoprotein may allow particle egress. In terms of processing, envelope glycoproteins are synthesized as an inactive precursor that is processed by host furin or a furin-like protease to yield a functional hetero-oligomeric complex. Post-translationally, the transmembrane protein and the surface protein are N-glycosylated. Mono- and polyubiquitinated leader peptide are found in viral particles. Ubiquitination may be involved in regulating the balance between viral and subviral particles release.

Its subcellular location is the host endoplasmic reticulum membrane. The protein localises to the virion membrane. Its function is as follows. The surface protein (SU) attaches the virus to the host cell by binding to the cell receptor. This interaction triggers the refolding of transmembrane protein (TM) and is thought to activate its fusogenic potential by unmasking its fusion peptide. Functionally, the transmembrane protein (TM) acts as a class I viral fusion protein. Under the current model, the protein has at least 3 conformational states: pre-fusion native state, pre-hairpin intermediate state, and post-fusion hairpin state. During viral and target cell membrane fusion, the coiled coil regions (heptad repeats) assume a trimer-of-hairpins structure, positioning the fusion peptide in close proximity to the C-terminal region of the ectodomain. The formation of this structure appears to drive apposition and subsequent fusion of viral and target cell membranes. Membranes fusion leads to delivery of the nucleocapsid into the cytoplasm. In terms of biological role, the leader peptide is a component of released, infectious virions and is required for particle budding. The sequence is that of Envelope glycoprotein gp130 (env) from Simian foamy virus type 1 (SFVmac).